Here is a 491-residue protein sequence, read N- to C-terminus: Cobyric acid synthase (491 aa).

Residues 253–429 (ARRVAVIRLP…WHGALEGDEL (177 aa)) enclose the GATase cobBQ-type domain. Catalysis depends on Cys-334, which acts as the Nucleophile. Residue His-421 is part of the active site.

Belongs to the CobB/CobQ family. CobQ subfamily.

The protein operates within cofactor biosynthesis; adenosylcobalamin biosynthesis. Functionally, catalyzes amidations at positions B, D, E, and G on adenosylcobyrinic A,C-diamide. NH(2) groups are provided by glutamine, and one molecule of ATP is hydrogenolyzed for each amidation. The sequence is that of Cobyric acid synthase from Mycolicibacterium gilvum (strain PYR-GCK) (Mycobacterium gilvum (strain PYR-GCK)).